We begin with the raw amino-acid sequence, 447 residues long: MREIVHIQAGQCGNQIGAKFWEIISDEHGIDPTGAYHGDSDLQLERINVYYNEASGGKYVPRAILVDLEPGTMDSVRSGPFGQIFRPDNFVFGQSGAGNNWAKGHYTEGAELVDSVLDVVRKEAESCDCLQGFQLTHSLGGGTGSGMGTLLISKIREEYPDRIMNTYSVVPSPKVSDTVVEPYNATLSVHQLVENTDETYCIDNEALYDICFRTLKLSTPTYGDLNHLVSLTMSGVTTCLRFPGQLNADLRKLAVNMVPFPRLHFFMPGFAPLTSRGSQQYRALTVPELTQQMFDAKNMMAACDPRHGRYLTVAAIFRGRMSMKEVDEQMLNIQNKNSSYFVEWIPNNVKTAVCDIPPRGLKMSATFIGNSTAIQELFKRISEQFTAMFRRKAFLHWYTGEGMDEMEFTEAESNMNDLVSEYQQYQEATADEDAEFDEEQEQEIEDN.

GTP-binding residues include Q11, E69, S138, G142, T143, G144, N204, and N226. E69 provides a ligand contact to Mg(2+). Positions 428 to 447 (ATADEDAEFDEEQEQEIEDN) are disordered. The segment covering 429 to 447 (TADEDAEFDEEQEQEIEDN) has biased composition (acidic residues).

Belongs to the tubulin family. In terms of assembly, dimer of alpha and beta chains. A typical microtubule is a hollow water-filled tube with an outer diameter of 25 nm and an inner diameter of 15 nM. Alpha-beta heterodimers associate head-to-tail to form protofilaments running lengthwise along the microtubule wall with the beta-tubulin subunit facing the microtubule plus end conferring a structural polarity. Microtubules usually have 13 protofilaments but different protofilament numbers can be found in some organisms and specialized cells. Requires Mg(2+) as cofactor.

It localises to the cytoplasm. It is found in the cytoskeleton. In terms of biological role, tubulin is the major constituent of microtubules, a cylinder consisting of laterally associated linear protofilaments composed of alpha- and beta-tubulin heterodimers. Microtubules grow by the addition of GTP-tubulin dimers to the microtubule end, where a stabilizing cap forms. Below the cap, tubulin dimers are in GDP-bound state, owing to GTPase activity of alpha-tubulin. This chain is Tubulin beta-1 chain, found in Manduca sexta (Tobacco hawkmoth).